A 1230-amino-acid polypeptide reads, in one-letter code: Cullin-associated NEDD8-dissociated protein 1 (1230 aa).

An N-acetylalanine modification is found at alanine 2. HEAT repeat units follow at residues 2-39, 44-81, 83-119, 131-165, 171-208, 210-247, 248-282, 289-366, 370-407, 424-467, 471-510, and 515-552; these read ASASYHISNLLEKMTSSDKDFRFMATNDLMTELQKDSI, DSERKVVKMILKLLEDKNGEVQNLAVKCLGPLVSKVKE, QVETIVDTLCTNMLSDKEQLRDISSIGLKTVIGELPP, CKKITGRLTSAIAKQEDVSVQLEALDIMADMLSRQ, NFHPSILTCLLPQLTSPRLAVRKRTIIALGHLVMSCGN, VFVDLIEHLLSELSKNDSMSTTRTYIQCIAAISRQAGH, RIGEYLEKIIPLVVKFCNVDDDELREYCIQAFESF, EVYP…TRHE, EFYKTVSPALISRFKEREENVKADVFHAYLSLLKQTRP, PLTM…VLPG, QHIPVLVPGIIFSLNDKSSSSNLKIDALSCLYVILCNHSP, and PHVQALVPPVVACVGDPFYKITSEALLVTQQLVKVIRP. Lysine 55 carries the N6-acetyllysine modification. Positions 315–344 are disordered; it reads DEDEDENAMDADGGDDDDQGSDDEYSDDDD. Serine 335 bears the Phosphoserine mark. Serine 558 bears the Phosphoserine mark. 15 HEAT repeats span residues 563 to 602, 606 to 643, 646 to 683, 688 to 725, 729 to 768, 770 to 808, 809 to 845, 852 to 889, 890 to 927, 928 to 960, 961 to 998, 1002 to 1039, 1043 to 1097, 1099 to 1133, and 1140 to 1189; these read PYIKDLFTCTIKRLKAADIDQEVKERAISCMGQIICNLGD, SDLPNTLQIFLERLKNEITRLTTVKALTLIAGSPLKID, PVLGEGVPILASFLRKNQRALKLGTLSALDILIKNYSD, AMIDAVLDELPPLISESDMHVSQMAISFLTTLAKVYPS, KISGSILNELIGLVRSPLLQGGALSAMLDFFQALVVTGTN, LGYMDLLRMLTGPVYSQSTALTHKQSYYSIAKCVAALTR, ACPKEGPAVVGQFIQDVKNSRSTDSIRLLALLSLGEV, SGQLELKSVILEAFSSPSEEVKSAASYALGSISVGNLP, EYLPFVLQEITSQPKRQYLLLHSLKEIISSASVVGLKP, YVENIWALLLKHCECAEEGTRNVVAECLGKLTL, IDPETLLPRLKGYLISGSSYARSSVVTAVKFTISDHPQ, PLLKNCIGDFLKTLEDPDLNVRRVALVTFNSAAHNKPS, DLLD…DSCL, RLDIFEFLNHVEDGLKDHYDIKMLTFLMLVRLSTL, and QRLD…IPEA. An N6-acetyllysine modification is found at lysine 971.

This sequence belongs to the CAND family. In terms of assembly, interacts with TBP. Part of a complex that contains CUL1 and RBX1. Interacts with unneddylated cullins: interacts with CUL1, CUL2, CUL3, CUL4A, CUL4B and CUL5. Does not bind neddylated CUL1. Interaction with cullins is abolished in presence of COMMD1, which antagonizes with CAND1 for interacting with cullins. Interacts with ERCC6. Interacts with DCUN1D1, DCUN1D2, DCUN1D3, DCUN1D4 and DCUN1D5; these interactions are bridged by cullins and strongly inhibits the neddylation of cullins.

It is found in the cytoplasm. The protein resides in the nucleus. Its function is as follows. Key assembly factor of SCF (SKP1-CUL1-F-box protein) E3 ubiquitin ligase complexes that promotes the exchange of the substrate-recognition F-box subunit in SCF complexes, thereby playing a key role in the cellular repertoire of SCF complexes. Acts as a F-box protein exchange factor. The exchange activity of CAND1 is coupled with cycles of neddylation conjugation: in the deneddylated state, cullin-binding CAND1 binds CUL1-RBX1, increasing dissociation of the SCF complex and promoting exchange of the F-box protein. Probably plays a similar role in other cullin-RING E3 ubiquitin ligase complexes. This is Cullin-associated NEDD8-dissociated protein 1 (CAND1) from Bos taurus (Bovine).